We begin with the raw amino-acid sequence, 144 residues long: Transcription antitermination protein NusB (144 aa).

The protein belongs to the NusB family.

In terms of biological role, involved in transcription antitermination. Required for transcription of ribosomal RNA (rRNA) genes. Binds specifically to the boxA antiterminator sequence of the ribosomal RNA (rrn) operons. In Blochmanniella pennsylvanica (strain BPEN), this protein is Transcription antitermination protein NusB.